Consider the following 185-residue polypeptide: Ribosome-recycling factor (185 aa).

It belongs to the RRF family.

It localises to the cytoplasm. Functionally, responsible for the release of ribosomes from messenger RNA at the termination of protein biosynthesis. May increase the efficiency of translation by recycling ribosomes from one round of translation to another. The polypeptide is Ribosome-recycling factor (Shewanella sp. (strain ANA-3)).